Here is a 120-residue protein sequence, read N- to C-terminus: Large ribosomal subunit protein uL18 (120 aa).

Belongs to the universal ribosomal protein uL18 family. Part of the 50S ribosomal subunit; part of the 5S rRNA/L5/L18/L25 subcomplex. Contacts the 5S and 23S rRNAs.

This is one of the proteins that bind and probably mediate the attachment of the 5S RNA into the large ribosomal subunit, where it forms part of the central protuberance. The sequence is that of Large ribosomal subunit protein uL18 from Exiguobacterium sp. (strain ATCC BAA-1283 / AT1b).